Consider the following 125-residue polypeptide: Phosphoribosyl-AMP cyclohydrolase (125 aa).

Position 74 (Asp-74) interacts with Mg(2+). Residue Cys-75 participates in Zn(2+) binding. The Mg(2+) site is built by Asp-76 and Asp-78. Positions 92 and 99 each coordinate Zn(2+).

It belongs to the PRA-CH family. In terms of assembly, homodimer. It depends on Mg(2+) as a cofactor. The cofactor is Zn(2+).

It is found in the cytoplasm. The catalysed reaction is 1-(5-phospho-beta-D-ribosyl)-5'-AMP + H2O = 1-(5-phospho-beta-D-ribosyl)-5-[(5-phospho-beta-D-ribosylamino)methylideneamino]imidazole-4-carboxamide. It functions in the pathway amino-acid biosynthesis; L-histidine biosynthesis; L-histidine from 5-phospho-alpha-D-ribose 1-diphosphate: step 3/9. Functionally, catalyzes the hydrolysis of the adenine ring of phosphoribosyl-AMP. This is Phosphoribosyl-AMP cyclohydrolase from Geotalea uraniireducens (strain Rf4) (Geobacter uraniireducens).